The following is a 312-amino-acid chain: MAVAMTPAAADELHTIVDLIRYGASRFSEAGLTFGHSYDNALDEATQLVLHALHLPPDLGPAYGQARLLHTEKECVLALFERRVTERVPVAYLTGDAWFAGLNFKSDARALVPRSPIAELIQAGFEPWLAGRDVRHALDLCTGSGCIAIAMGHYNPHWSVDGADISEDALSLALENKVRLLAHNVELIKSDVFAGLVGRRYQLIVSNPPYVTDAETDALPQEYGYEPELGLRAGPDGLNLVLKILRDAPAHLDEEGLLICEVGESEQQLVRLLPQVDFAWVEFKVGQMGVFAVECRELIAHHDPIAALAAER.

It belongs to the protein N5-glutamine methyltransferase family. PrmB subfamily.

The enzyme catalyses L-glutaminyl-[ribosomal protein uL3] + S-adenosyl-L-methionine = N(5)-methyl-L-glutaminyl-[ribosomal protein uL3] + S-adenosyl-L-homocysteine + H(+). Methylates large ribosomal subunit protein uL3 on a specific glutamine residue. The polypeptide is Ribosomal protein uL3 glutamine methyltransferase (Xylella fastidiosa (strain 9a5c)).